Here is a 411-residue protein sequence, read N- to C-terminus: Elongation factor Tu, apicoplast (411 aa).

In terms of domain architecture, tr-type G spans 10–214; it reads KPHVNIGTIG…TVDSYIEKPE (205 aa). The tract at residues 19-26 is G1; that stretch reads GHVDHGKT. Residue 19 to 26 coordinates GTP; that stretch reads GHVDHGKT. Thr-26 contacts Mg(2+). Residues 61-65 form a G2 region; the sequence is GITIN. Positions 82–85 are G3; that stretch reads DCPG. GTP-binding positions include 82–86 and 137–140; these read DCPGH and NKED. The tract at residues 137–140 is G4; sequence NKED. The G5 stretch occupies residues 175-177; it reads SAL.

The protein belongs to the TRAFAC class translation factor GTPase superfamily. Classic translation factor GTPase family. EF-Tu/EF-1A subfamily.

Its subcellular location is the plastid. It localises to the apicoplast. It carries out the reaction GTP + H2O = GDP + phosphate + H(+). Functionally, GTP hydrolase that promotes the GTP-dependent binding of aminoacyl-tRNA to the A-site of ribosomes during protein biosynthesis. The polypeptide is Elongation factor Tu, apicoplast (tufA) (Theileria parva (East coast fever infection agent)).